Consider the following 1048-residue polypeptide: Malignant fibrous histiocytoma-amplified sequence 1 homolog (1048 aa).

N-acetylalanine is present on alanine 2. LRR repeat units follow at residues 60 to 81 (DIEV…LGSA), 84 to 105 (SLRV…VAEL), 108 to 129 (HLTE…VVSA), 132 to 153 (ELRK…LGAL), 155 to 176 (HLEE…FSCL), 178 to 199 (HLRT…LLQL), 201 to 222 (ALEE…ISAL), 224 to 246 (ALKI…CELA), 247 to 268 (SLES…FSRL), 270 to 292 (RLKM…LPLA), 293 to 314 (GLEE…IAGL), 316 to 337 (RLLT…IVEL), and 339 to 360 (GLEE…FGQL). Residues 60-360 (DIEVLNLGNN…AVLPDNFGQL (301 aa)) are required for interaction with PJA2. Residues 60–645 (DIEVLNLGNN…DKLLSVAEHR (586 aa)) are required for interaction with PPP2R2A. A Roc domain is found at 399 to 645 (QPAVQPRLKL…DKLLSVAEHR (247 aa)). The residue at position 597 (lysine 597) is an N6-acetyllysine.

Interacts with RAF1. Interacts with HSPD1. Interacts with PPP2CA; retains PPP2CA into the cytoplasm and excludes it from the nucleus. Interacts with PPP2R2A; the interaction is direct. Interacts with PJA2. Post-translationally, ubiquitinated. Ubiquitination by PJA2 does not lead MFHAS1 to proteasomal degradation but positively regulates its function in polarization of macrophages.

Its subcellular location is the cytoplasm. In terms of biological role, probable GTP-binding protein. Functions in innate immunity and more specifically the inflammatory response as a regulator of the Toll-like receptor TLR2 and TLR4 signaling pathways. Negatively regulates the part of the TLR4 signaling pathway that leads to the activation of the transcription factor AP-1. By retaining the phosphatase complex PP2A into the cytoplasm, prevents the dephosphorylation of the AP-1 subunit JUN which is required for proper activation of the transcription factor. Both inhibits and activates the TLR2-dependent signaling pathway. Positively regulates the TLR2 signaling pathway to activate specifically the downstream p38 and JNK MAP kinases and promote the polarization of macrophages toward the pro-inflammatory M1 phenotype. It may also play a role in the regulation of inflammation induced by high glucose through the PKB/AKT signaling pathway. Also involved in erythrocyte differentiation through activation of the ERK1/ERK2 signaling pathway. This Mus musculus (Mouse) protein is Malignant fibrous histiocytoma-amplified sequence 1 homolog.